Reading from the N-terminus, the 96-residue chain is Citrate lyase acyl carrier protein (96 aa).

Serine 14 carries the O-(phosphoribosyl dephospho-coenzyme A)serine modification.

It belongs to the CitD family. In terms of assembly, oligomer with a subunit composition of (alpha,beta,gamma)6.

The protein localises to the cytoplasm. In terms of biological role, covalent carrier of the coenzyme of citrate lyase. The chain is Citrate lyase acyl carrier protein from Lactiplantibacillus plantarum (strain ATCC BAA-793 / NCIMB 8826 / WCFS1) (Lactobacillus plantarum).